A 315-amino-acid chain; its full sequence is Ester hydrolase C11orf54 (315 aa).

Zn(2+)-binding residues include H266, H268, and H278.

Monomer. Zn(2+) is required as a cofactor.

Its subcellular location is the nucleus. It localises to the cytoplasm. Exhibits ester hydrolase activity on the substrate p-nitrophenyl acetate, in vitro. Regulates DNA damage and repair by regulating HIF1A degradation via chaperone-mediated autophagy (CMA). Functionally, probably non-functional. The protein is Ester hydrolase C11orf54 (C11orf54) of Homo sapiens (Human).